A 24-amino-acid chain; its full sequence is Coenzyme PQQ synthesis protein A (24 aa).

Residues Glu-16–Tyr-20 constitute a cross-link (pyrroloquinoline quinone (Glu-Tyr)).

The protein belongs to the PqqA family.

Its pathway is cofactor biosynthesis; pyrroloquinoline quinone biosynthesis. In terms of biological role, required for coenzyme pyrroloquinoline quinone (PQQ) biosynthesis. PQQ is probably formed by cross-linking a specific glutamate to a specific tyrosine residue and excising these residues from the peptide. The chain is Coenzyme PQQ synthesis protein A from Cupriavidus taiwanensis (strain DSM 17343 / BCRC 17206 / CCUG 44338 / CIP 107171 / LMG 19424 / R1) (Ralstonia taiwanensis (strain LMG 19424)).